The chain runs to 119 residues: MNTEKLETLLGFYKQYKALSEYIDKKYKLSLNDLAVLDLTMKHCKDEKVLMQSFLKTAMDELDLSRTKLLVSIRRLIEKERLSKVRSSKDERKIYIYLNNDDISKFNALFEDVEQFLNI.

Residues 55 to 78 constitute a DNA-binding region (H-T-H motif); that stretch reads LKTAMDELDLSRTKLLVSIRRLIE.

Belongs to the SarA family.

The protein localises to the cytoplasm. Its function is as follows. Involved in the regulation of virulence genes. Acts as a repressor of the agr locus and consequently targets genes regulated by the agr system such as sspA, hla and hlb. Binds directly to the agr promoter region. This is HTH-type transcriptional regulator SarX (sarX) from Staphylococcus aureus (strain USA300).